A 572-amino-acid chain; its full sequence is Cytochrome P450 monooxygenase xilC (572 aa).

Cys515 lines the heme pocket.

It belongs to the cytochrome P450 family. Requires heme as cofactor.

The protein operates within secondary metabolite biosynthesis. Functionally, cytochrome P450 monooxygenase; part of the gene cluster that mediates the biosynthesis of the 6-methyl-2-pyrone derivative xylariolide D. XilC hydroxylates the 5-alkyl-6-methyl-2-pyrone backbone called prexylariolide D, produced by the highly reducing polyketide synthase xilA, on its side chain to form xylariolide D. The chain is Cytochrome P450 monooxygenase xilC from Penicillium crustosum (Blue mold fungus).